We begin with the raw amino-acid sequence, 235 residues long: Serine protease SplA (235 aa).

A signal peptide spans 1-35; the sequence is MNKNVMVKGLTALTILTSLGFAENISNQPHSIAKA. Catalysis depends on charge relay system residues H74, D113, and S189.

Belongs to the peptidase S1B family.

The protein localises to the secreted. This Staphylococcus aureus (strain Mu3 / ATCC 700698) protein is Serine protease SplA (splA).